The primary structure comprises 212 residues: MDGKVTYEGAVYSSGPGVEVGDIVFVEDWDGRPASEWSVQRIGVLQSKIERYTYQIYHSNRYGKHNLSKLIPRHVLVGFANEVFGFDGWKTDIEFVETKDGFPGSTSSISIADKISADSGGGTGALADRYTVIAEASVKVTLKDGTNTRMTGFSRATTPSKIESFNKAKKEAVNDALKKALLSFEKIILEHELKTKNDFYVDGLYGSKAQKI.

The protein belongs to the RAD52 family. In terms of assembly, interacts with RAD51 and RAD52.

It is found in the nucleus. Involved in the repair of double-strand breaks in DNA during vegetative growth via recombination and single-strand annealing. Anneals complementary single-stranded DNA. The polypeptide is DNA repair protein RAD59 (RAD59) (Candida glabrata (strain ATCC 2001 / BCRC 20586 / JCM 3761 / NBRC 0622 / NRRL Y-65 / CBS 138) (Yeast)).